The following is a 423-amino-acid chain: UDP-N-acetylglucosamine 1-carboxyvinyltransferase 2 (423 aa).

K23–N24 provides a ligand contact to phosphoenolpyruvate. R96 serves as a coordination point for UDP-N-acetyl-alpha-D-glucosamine. C120 acts as the Proton donor in catalysis. C120 is modified (2-(S-cysteinyl)pyruvic acid O-phosphothioketal). Residues R125–L129, D309, and V331 each bind UDP-N-acetyl-alpha-D-glucosamine.

This sequence belongs to the EPSP synthase family. MurA subfamily.

The protein resides in the cytoplasm. It catalyses the reaction phosphoenolpyruvate + UDP-N-acetyl-alpha-D-glucosamine = UDP-N-acetyl-3-O-(1-carboxyvinyl)-alpha-D-glucosamine + phosphate. It participates in cell wall biogenesis; peptidoglycan biosynthesis. In terms of biological role, cell wall formation. Adds enolpyruvyl to UDP-N-acetylglucosamine. This chain is UDP-N-acetylglucosamine 1-carboxyvinyltransferase 2, found in Streptococcus agalactiae serotype III (strain NEM316).